A 370-amino-acid polypeptide reads, in one-letter code: Glucan endo-1,3-beta-glucosidase (370 aa).

An N-terminal signal peptide occupies residues 1 to 32; sequence MASFFARTRRFSLVSLFLLELFTINLIPTTDA. Gln-33 bears the Pyrrolidone carboxylic acid mark. Glu-127 acts as the Proton donor in catalysis. Glu-272 functions as the Nucleophile in the catalytic mechanism. The propeptide at 348–370 is removed in mature form; that stretch reads GERRDGEIVEGDFNGTVSLKSDM. Asn-361 is a glycosylation site (N-linked (GlcNAc...) asparagine).

The protein belongs to the glycosyl hydrolase 17 family. As to expression, constitutively expressed in seedling roots.

It carries out the reaction Hydrolysis of (1-&gt;3)-beta-D-glucosidic linkages in (1-&gt;3)-beta-D-glucans.. Implicated in the defense of plants against pathogens. In Pisum sativum (Garden pea), this protein is Glucan endo-1,3-beta-glucosidase.